A 301-amino-acid chain; its full sequence is MSVREKMLEILEGIDIRFKEPLHSYSYTKVGGEADYLVFPRNRFELARLVKFANQENIPWMVLGNASNIIVRDGGIRGFVILCDKLNNVSVDGYTIEAEAGANLIETTRIALRHSLTGFEFACGIPGSVGGAVFMNAGAYGGEIAHILQSCKVLTKDGEIETLSAKDLAFGYRHSAIQESGAVVLSVKFALAPGTHQVIKQEMDRLTHLRELKQPLEYPSCGSVFKRPVGHFAGQLISEAGLKGYRIGGVEVSEKHAGFMINVADGTAKDYEDLIQSVIEKVKEHSGITLEREVRILGESK.

One can recognise an FAD-binding PCMH-type domain in the interval 30 to 194; that stretch reads VGGEADYLVF…LSVKFALAPG (165 aa). The active site involves R173. S223 (proton donor) is an active-site residue. E293 is a catalytic residue.

Belongs to the MurB family. It depends on FAD as a cofactor.

It localises to the cytoplasm. The catalysed reaction is UDP-N-acetyl-alpha-D-muramate + NADP(+) = UDP-N-acetyl-3-O-(1-carboxyvinyl)-alpha-D-glucosamine + NADPH + H(+). It participates in cell wall biogenesis; peptidoglycan biosynthesis. In terms of biological role, cell wall formation. This is UDP-N-acetylenolpyruvoylglucosamine reductase from Streptococcus pneumoniae (strain JJA).